Reading from the N-terminus, the 282-residue chain is tRNA uridine(34) hydroxylase (282 aa).

Residues Asp128–Tyr222 form the Rhodanese domain. Catalysis depends on Cys182, which acts as the Cysteine persulfide intermediate.

This sequence belongs to the TrhO family.

The catalysed reaction is uridine(34) in tRNA + AH2 + O2 = 5-hydroxyuridine(34) in tRNA + A + H2O. Its function is as follows. Catalyzes oxygen-dependent 5-hydroxyuridine (ho5U) modification at position 34 in tRNAs. This chain is tRNA uridine(34) hydroxylase, found in Ralstonia nicotianae (strain ATCC BAA-1114 / GMI1000) (Ralstonia solanacearum).